An 820-amino-acid polypeptide reads, in one-letter code: Sodium/hydrogen exchanger 1 (820 aa).

The Extracellular segment spans residues 1–102 (MMLRWSGIWG…FPVLDIDYLH (102 aa)). The segment at 44–71 (ASTIRGSEPPRERSIGDVTTAPSEPLHH) is disordered. A helical membrane pass occupies residues 103–125 (VRTPFEISLWILLACLMKIGFHV). The Cytoplasmic portion of the chain corresponds to 126–134 (IPTISSIVP). The chain crosses the membrane as a helical span at residues 135-152 (ESCLLIVVGLLVGGLIKG). Over 153–162 (VGETPPFLQS) the chain is Extracellular. The helical transmembrane segment at 163–180 (DVFFLFLLPPIILDAGYF) threads the bilayer. The Cytoplasmic segment spans residues 181–190 (LPLRQFTENL). A helical transmembrane segment spans residues 191–219 (GTILIFAVVGTLWNAFFLGGLLYAVCLVG). Topologically, residues 220–226 (GEQINNI) are extracellular. The helical transmembrane segment at 227–253 (GLLDTLLFGSIISAVDPVAVLAVFEEI) threads the bilayer. At 254–256 (HIN) the chain is on the cytoplasmic side. Residues 257 to 287 (ELLHILVFGESLLNDAVTVVLYHLFEEFASY) traverse the membrane as a helical segment. The Extracellular portion of the chain corresponds to 288 to 291 (EYVG). The chain crosses the membrane as a helical span at residues 292 to 326 (ISDIFLGFLSFFVVSLGGVFVGVVYGVIAAFTSRF). Over 327-332 (TSHIRV) the chain is Cytoplasmic. A helical transmembrane segment spans residues 333–345 (IEPLFVFLYSYMA). Residues 346-354 (YLSAELFHL) lie on the Extracellular side of the membrane. Residues 355 to 375 (SGIMALIASGVVMRPYVEANI) form a helical membrane-spanning segment. Topologically, residues 376–377 (SH) are cytoplasmic. The helical transmembrane segment at 378 to 408 (KSHTTIKYFLKMWSSVSETLIFIFLGVSTVA) threads the bilayer. The Extracellular segment spans residues 409 to 414 (GSHQWN). A helical transmembrane segment spans residues 415-442 (WTFVISTLLFCLIARVLGVLVLTWFINK). The Cytoplasmic segment spans residues 443–448 (FRIVKL). A helical membrane pass occupies residues 449–473 (TPKDQFIIAYGGLRGAIAFSLGYLL). Residues 474 to 479 (DKKHFP) are Extracellular-facing. A helical transmembrane segment spans residues 480 to 509 (MCDLFLTAIITVIFFTVFVQGMTIRPLVDL). The segment at 505 to 571 (PLVDLLAVKK…VKKCLIAGER (67 aa)) is interaction with TESC. The Cytoplasmic segment spans residues 510–820 (LAVKKKQETK…EGEPFIPKGQ (311 aa)). A PI(4,5)P2-binding region region spans residues 513–520 (KKKQETKR). The interval 519–549 (KRSINEEIHTQFLDHLLTGIEDICGHYGHHH) is interaction with CHP2. Positions 544–549 (HYGHHH) are confers pH-dependent PI(4,5)P2 binding. The PI(4,5)P2-binding region stretch occupies residues 556–564 (RFNKKYVKK). Residues S603 and S606 each carry the phosphoserine modification. T607 carries the post-translational modification Phosphothreonine. S609 and S652 each carry phosphoserine. Residues 637-820 (KILRSNLQKT…EGEPFIPKGQ (184 aa)) are interaction with TESC. The interaction with CALM1 stretch occupies residues 637 to 820 (KILRSNLQKT…EGEPFIPKGQ (184 aa)). Positions 688 to 691 (LTVP) are interaction with PPP3CA. S697, S701, and S707 each carry phosphoserine. An interaction with PPP3CA region spans residues 719–724 (PVITID). 3 positions are modified to phosphoserine: S727, S730, and S733. Residues 747–820 (GLKRGPRTTP…EGEPFIPKGQ (74 aa)) form a disordered region. T755 and T784 each carry phosphothreonine. Phosphoserine is present on residues S790 and S801.

The protein belongs to the monovalent cation:proton antiporter 1 (CPA1) transporter (TC 2.A.36) family. As to quaternary structure, homodimer; dimerization is crucial for its function. Oligomer. Interacts with CALM1 in a calcium-dependent manner. Interacts with TESC. Interacts (via residues 504-563) with CHP1. The interaction with CHP1 occurs at the plasma membrane in a calcium-dependent manner. Interacts with CHP2. The interaction with CHP2 occurs in a calcium-dependent manner. Interacts with EZR; regulates the cytoskeletal interactions of SLC9A1 and promotes stress fiber formation. In terms of processing, N-glycosylated and O-glycosylated in the N-terminal region. Post-translationally, ubiquitinated, leading to its degradation by the proteasome. Ubiquitination is reduced by CHP1. Palmitoylated; may play a major role in SLC9A1 regulation. In terms of processing, phosphorylation at Thr-784 increases SLC9A1 activity; specifically dephosphorylated by PPP3CA. Specifically dephosphorylated at Thr-784 by PPP3CA that negatively regulates SLC9A1 activity. Phosphorylation at Ser-652 by AKT1 reduces SLC9A1 binding to CALM1. In terms of tissue distribution, widely expressed.

Its subcellular location is the cell membrane. The protein localises to the basolateral cell membrane. It catalyses the reaction Na(+)(in) + H(+)(out) = Na(+)(out) + H(+)(in). The catalysed reaction is Li(+)(out) + H(+)(in) = Li(+)(in) + H(+)(out). It carries out the reaction Li(+)(in) + Na(+)(out) = Li(+)(out) + Na(+)(in). Activated at acidic pHs. Inhibited by cariporide and eniporide. Inhibited by amiloride and 5-amino-substituted derivatives. Phosphatidylinositol 4,5-bisphosphate (PI(4,5)P2) bind and activates SLC9A1 transporter activity. In terms of biological role, electroneutral Na(+) /H(+) antiporter that extrudes Na(+) in exchange for external protons driven by the inward sodium ion chemical gradient, protecting cells from acidification that occurs from metabolism. Exchanges intracellular H(+) ions for extracellular Na(+) in 1:1 stoichiometry. Plays a key role in maintening intracellular pH neutral and cell volume, and thus is important for cell growth, proliferation, migration and survival. In addition, can transport lithium Li(+) and also functions as a Na(+)/Li(+) antiporter. SLC9A1 also functions in membrane anchoring and organization of scaffolding complexes that coordinate signaling inputs. The polypeptide is Sodium/hydrogen exchanger 1 (Slc9a1) (Rattus norvegicus (Rat)).